A 425-amino-acid polypeptide reads, in one-letter code: MSRVNKLHQWKERLRDRARTVSFGRFLWRRFLDDRLFQAAASLAYTTVFALVPLAIVVFGVLSAFPAFNEWKDALTDFIFNNFVPGAARSVQNYLNRSLEDLGKFTVAGMVALVASLLITLHSIEQTFNSIWRVAAARPKVTRFLIYWTVLTLGTMLAAASMAMAAYVFALPLFRTTEGQWLAEFAWRLAPMAVEFVCIVLIYRVVPQHVVRLRHALPGALLAVILMEIVKWGFGFYLGNFQTYQRIYGALSALPILLLWIYLSWVSVLLGASLASSMSAFRYQPEAMRLPPGFEIYGLLRLLGRFRQARVHGDGLDEDRILALEPMLTDTLMQELLCELKRIRLLRRDERGQWLLARDLDVVPLAELYENCQLRVPIEDRPLPCRDDAYGQAAAAALEQLRQPLRSVLAQPVGDLYTHLPGDPP.

The next 6 helical transmembrane spans lie at 48-68 (VFAL…FPAF), 105-125 (FTVA…HSIE), 154-174 (GTML…LPLF), 182-202 (LAEF…IVLI), 216-236 (ALPG…GFGF), and 250-270 (ALSA…SVLL).

It belongs to the UPF0761 family.

It is found in the cell inner membrane. The polypeptide is UPF0761 membrane protein XCV0968 (Xanthomonas euvesicatoria pv. vesicatoria (strain 85-10) (Xanthomonas campestris pv. vesicatoria)).